Reading from the N-terminus, the 1080-residue chain is Serine/threonine-protein kinase KIC1 (1080 aa).

Residues 23–276 (FKRTEVIGRG…ADDLLKSKFI (254 aa)) enclose the Protein kinase domain. ATP contacts are provided by residues 29-37 (IGRGKFGVV) and Lys52. Catalysis depends on Asp144, which acts as the Proton acceptor. 4 disordered regions span residues 308–347 (EGSIPENEPSKPSEAPKPSQNGGGDEAQKSIASNDNEIKR), 615–760 (KARS…LAPP), 787–831 (STLN…LQMP), and 901–956 (SQSI…NTGN). A compositionally biased stretch (low complexity) spans 312 to 326 (PENEPSKPSEAPKPS). Positions 615–626 (KARSSTVTAGTP) are enriched in polar residues. Residues 627–638 (SSSSSIQYKSPS) show a composition bias toward low complexity. Residues 656–673 (STITNQKLGSAVASNSGI) are compositionally biased toward polar residues. Low complexity predominate over residues 674 to 689 (SSTPNNSNNYNNNTDS). Residues 693–726 (RGSSGSNTANSTQMGITNPGNVTKLSTHKASSPS) are compositionally biased toward polar residues. Position 735 is a phosphoserine (Ser735). Residues 743-756 (SPTQNIGHNSTHTN) show a composition bias toward polar residues. Low complexity predominate over residues 787–807 (STLNTISGNSSNNLTSSNYFS). Residues 808–821 (NEKEGSRVNGDFKR) are compositionally biased toward basic and acidic residues. Residues 901-913 (SQSISNRKNSSAS) are compositionally biased toward polar residues. Residues 918–956 (NILGSSVSGNVSGIGNNNVGSNNNSGPNNSVPLSANTGN) are compositionally biased toward low complexity.

The protein belongs to the protein kinase superfamily. Ser/Thr protein kinase family. Interacts with CDC31.

The catalysed reaction is L-seryl-[protein] + ATP = O-phospho-L-seryl-[protein] + ADP + H(+). It carries out the reaction L-threonyl-[protein] + ATP = O-phospho-L-threonyl-[protein] + ADP + H(+). In terms of biological role, protein kinase involved in morphogenesis and cell integrity. The polypeptide is Serine/threonine-protein kinase KIC1 (KIC1) (Saccharomyces cerevisiae (strain ATCC 204508 / S288c) (Baker's yeast)).